Consider the following 316-residue polypeptide: uncharacterized protein (316 aa).

Disordered stretches follow at residues Ala-82–Asn-105 and Ala-238–Glu-257. 2 stretches are compositionally biased toward low complexity: residues Ala-84–Thr-96 and Ser-239–Thr-255.

It belongs to the MG307/MG309/MG338 family.

This is an uncharacterized protein from Mycoplasma pneumoniae (strain ATCC 29342 / M129 / Subtype 1) (Mycoplasmoides pneumoniae).